We begin with the raw amino-acid sequence, 92 residues long: AVSCGQVDTALTPCLTYLTKGGTPSTQCCSGVRSLKSMTGTKVPDRQAACNCLKQAAARYQGIKDAAAALSQKCGVQLSVPISRSTDCSKIS.

Cystine bridges form between C4/C52, C14/C28, C29/C74, and C50/C88.

It belongs to the plant LTP family. In terms of tissue distribution, expressed in seeds and, at very low levels, in pulp of fruit (at protein level).

In terms of biological role, plant non-specific lipid-transfer proteins transfer phospholipids as well as galactolipids across membranes. May play a role in wax or cutin deposition in the cell walls of expanding epidermal cells and certain secretory tissues. In Actinidia deliciosa (Kiwi), this protein is Non-specific lipid-transfer protein 1.